We begin with the raw amino-acid sequence, 645 residues long: Mediator of RNA polymerase II transcription subunit 17 (645 aa).

Belongs to the Mediator complex subunit 17 family. In terms of assembly, component of the Mediator complex.

It localises to the nucleus. Component of the Mediator complex, a coactivator involved in the regulated transcription of nearly all RNA polymerase II-dependent genes. Mediator functions as a bridge to convey information from gene-specific regulatory proteins to the basal RNA polymerase II transcription machinery. Mediator is recruited to promoters by direct interactions with regulatory proteins and serves as a scaffold for the assembly of a functional preinitiation complex with RNA polymerase II and the general transcription factors. This chain is Mediator of RNA polymerase II transcription subunit 17 (MED17), found in Aedes aegypti (Yellowfever mosquito).